The chain runs to 88 residues: L-amino-acid oxidase (88 aa).

Residues glutamate 74 and 81–86 (GWIDST) contribute to the FAD site. 81–82 (GW) contributes to the substrate binding site.

It belongs to the flavin monoamine oxidase family. FIG1 subfamily. In terms of assembly, homodimer; non-covalently linked. Requires FAD as cofactor. N-glycosylated. In terms of tissue distribution, expressed by the venom gland.

It localises to the secreted. It catalyses the reaction an L-alpha-amino acid + O2 + H2O = a 2-oxocarboxylate + H2O2 + NH4(+). It carries out the reaction L-leucine + O2 + H2O = 4-methyl-2-oxopentanoate + H2O2 + NH4(+). The enzyme catalyses L-phenylalanine + O2 + H2O = 3-phenylpyruvate + H2O2 + NH4(+). The catalysed reaction is L-tryptophan + O2 + H2O = indole-3-pyruvate + H2O2 + NH4(+). It catalyses the reaction L-methionine + O2 + H2O = 4-methylsulfanyl-2-oxobutanoate + H2O2 + NH4(+). It carries out the reaction L-isoleucine + O2 + H2O = (S)-3-methyl-2-oxopentanoate + H2O2 + NH4(+). The enzyme catalyses L-arginine + O2 + H2O = 5-guanidino-2-oxopentanoate + H2O2 + NH4(+). The catalysed reaction is L-histidine + O2 + H2O = 3-(imidazol-5-yl)pyruvate + H2O2 + NH4(+). It catalyses the reaction L-asparagine + O2 + H2O = 2-oxosuccinamate + H2O2 + NH4(+). It carries out the reaction L-valine + O2 + H2O = 3-methyl-2-oxobutanoate + H2O2 + NH4(+). The enzyme catalyses L-glutamate + O2 + H2O = H2O2 + 2-oxoglutarate + NH4(+). Its function is as follows. Catalyzes an oxidative deamination of predominantly hydrophobic and aromatic L-amino acids, thus producing hydrogen peroxide that may contribute to the diverse toxic effects of this enzyme. Is highly active on L-Met, L-Leu, L-Phe, L-Ile, and L-Arg, moderately active on L-His, L-Trp, L-Asn, L-Glu, and L-Val, and weakly or not active on L-Gln, L-Lys, L-Asp, L-Ala, L-Tyr, L-Ser, L-Pro, L-Gly, L-Thr, and L-Cys. Exhibits diverse biological activities, such as hemorrhage, hemolysis, edema, apoptosis of vascular endothelial cells or tumor cell lines, antibacterial and antiparasitic activities. In addition, this protein has an ability to induce apoptosis in cultured HeLa and K562 cells, and inhibits ADP-induced platelet aggregation dose-dependently. Effects of snake L-amino oxidases on platelets are controversial, since they either induce aggregation or inhibit agonist-induced aggregation. These different effects are probably due to different experimental conditions. The sequence is that of L-amino-acid oxidase from Vipera berus berus (Common viper).